The chain runs to 273 residues: Putative phosphoenolpyruvate synthase regulatory protein (273 aa).

153-160 provides a ligand contact to ADP; it reads AVSRAGKT.

Belongs to the pyruvate, phosphate/water dikinase regulatory protein family. PSRP subfamily.

The enzyme catalyses [pyruvate, water dikinase] + ADP = [pyruvate, water dikinase]-phosphate + AMP + H(+). It catalyses the reaction [pyruvate, water dikinase]-phosphate + phosphate + H(+) = [pyruvate, water dikinase] + diphosphate. In terms of biological role, bifunctional serine/threonine kinase and phosphorylase involved in the regulation of the phosphoenolpyruvate synthase (PEPS) by catalyzing its phosphorylation/dephosphorylation. The sequence is that of Putative phosphoenolpyruvate synthase regulatory protein from Xanthomonas oryzae pv. oryzae (strain MAFF 311018).